The following is a 152-amino-acid chain: Large ribosomal subunit protein uL15 (152 aa).

A disordered region spans residues 1-57 (MTSTLNTLKSNSGSRKKKLRKGRGIAAGQGASCGFGMRGQKSRSGRPTRPGFEGGQM). Over residues 14-23 (SRKKKLRKGR) the composition is skewed to basic residues. Over residues 25–37 (IAAGQGASCGFGM) the composition is skewed to gly residues.

Belongs to the universal ribosomal protein uL15 family. Part of the 50S ribosomal subunit.

Its function is as follows. Binds to the 23S rRNA. This is Large ribosomal subunit protein uL15 from Prochlorococcus marinus (strain MIT 9312).